Reading from the N-terminus, the 311-residue chain is Putative ribose-phosphate pyrophosphokinase 2 (311 aa).

ATP is bound by residues 38 to 40 and 97 to 98; these read DGE and RQ. Mg(2+) is bound by residues histidine 131 and aspartate 171. Aspartate 219 contributes to the D-ribose 5-phosphate binding site.

The protein belongs to the ribose-phosphate pyrophosphokinase family. Class I subfamily. In terms of assembly, homohexamer. It depends on Mg(2+) as a cofactor.

It localises to the cytoplasm. The catalysed reaction is D-ribose 5-phosphate + ATP = 5-phospho-alpha-D-ribose 1-diphosphate + AMP + H(+). The protein operates within metabolic intermediate biosynthesis; 5-phospho-alpha-D-ribose 1-diphosphate biosynthesis; 5-phospho-alpha-D-ribose 1-diphosphate from D-ribose 5-phosphate (route I): step 1/1. Functionally, involved in the biosynthesis of the central metabolite phospho-alpha-D-ribosyl-1-pyrophosphate (PRPP) via the transfer of pyrophosphoryl group from ATP to 1-hydroxyl of ribose-5-phosphate (Rib-5-P). The polypeptide is Putative ribose-phosphate pyrophosphokinase 2 (Listeria innocua serovar 6a (strain ATCC BAA-680 / CLIP 11262)).